A 234-amino-acid polypeptide reads, in one-letter code: Preprocaerulein type-4 (234 aa).

Positions 1–26 are cleaved as a signal peptide; the sequence is MFKGILLCVLFAVLSANPLSQPEGFA. A propeptide spanning residues 27-73 is cleaved from the precursor; the sequence is DEEERDVRGLASLLGKALKAALKIGANALGGSPQQREANDERRFADG. Tyr-77 is subject to Sulfotyrosine. Position 83 is a phenylalanine amide (Phe-83). Residues 87–137 constitute a propeptide that is removed on maturation; the sequence is DDEDDVNERDVRGFGSFLGKALKAGLKIGTHFLGGAPQQREANDERRFADG. The residue at position 141 (Tyr-141) is a Sulfotyrosine. Phe-147 is modified (phenylalanine amide). Positions 151–152 are excised as a propeptide; sequence DG. A Sulfotyrosine modification is found at Tyr-156. Phe-162 carries the post-translational modification Phenylalanine amide. The propeptide occupies 166 to 216; sequence DDEDDVHERDVRGFGSFLGKALKAALKIGANALGGSPQQREANDERRFADG. A disordered region spans residues 198–234; the sequence is LGGSPQQREANDERRFADGQQDYTGWMDFGRRNGEDD. Tyr-220 is subject to Sulfotyrosine. Phe-226 carries the phenylalanine amide modification. The propeptide occupies 230–234; the sequence is NGEDD.

Belongs to the gastrin/cholecystokinin family. As to expression, expressed by the skin glands.

The protein resides in the secreted. In terms of biological role, the pharmacological activities of caerulein are quite similar to the physiological activities of gastrin and related peptides. The polypeptide is Preprocaerulein type-4 (Xenopus borealis (Kenyan clawed frog)).